A 104-amino-acid chain; its full sequence is Phosphoribosyl-ATP pyrophosphatase (104 aa).

Belongs to the PRA-PH family.

The protein resides in the cytoplasm. It carries out the reaction 1-(5-phospho-beta-D-ribosyl)-ATP + H2O = 1-(5-phospho-beta-D-ribosyl)-5'-AMP + diphosphate + H(+). The protein operates within amino-acid biosynthesis; L-histidine biosynthesis; L-histidine from 5-phospho-alpha-D-ribose 1-diphosphate: step 2/9. The chain is Phosphoribosyl-ATP pyrophosphatase from Streptococcus gordonii (strain Challis / ATCC 35105 / BCRC 15272 / CH1 / DL1 / V288).